The sequence spans 104 residues: Large ribosomal subunit protein bL21c (104 aa).

It belongs to the bacterial ribosomal protein bL21 family. Part of the 50S ribosomal subunit.

The protein resides in the plastid. The protein localises to the chloroplast. Functionally, this protein binds to 23S rRNA. The protein is Large ribosomal subunit protein bL21c of Porphyra purpurea (Red seaweed).